A 358-amino-acid polypeptide reads, in one-letter code: METLTVNLAERSYPIYVGAGLLTSSALFAPHIAGQRVMIVTNDTVAPLYLDVLRKTLAGYQIDTLILPDGEAHKTLASFEVIMSALLKGTHGRDTTLIALGGGVIGDLVGFAAACYQRGVPFIQVPTTLLSQVDSSVGGKTAVNHPLGKNMIGAFYQPKAVIIDIDCLRTLPSRELAAGMAEVIKYGIIWDADFFSWLEQHISDIQSLSPDALSKIILRCCAIKADVVAQDETENGVRALLNLGHTFGHAIEAEQGYGKWLHGEAVAAGTVQAAETSLRLGLLSDTDVSRIKALLKAANLPVTAPADMTYDDYIHHMLRDKKAKAGKLRLVLPQAIGRADLFTDVEQTVLRAVIDATH.

NAD(+) contacts are provided by residues 69-74, 103-107, 127-128, K140, K149, and 167-170; these read DGEAHK, GVIGD, TT, and CLRT. Zn(2+)-binding residues include E182, H245, and H262.

Belongs to the sugar phosphate cyclases superfamily. Dehydroquinate synthase family. Co(2+) serves as cofactor. It depends on Zn(2+) as a cofactor. Requires NAD(+) as cofactor.

The protein localises to the cytoplasm. The enzyme catalyses 7-phospho-2-dehydro-3-deoxy-D-arabino-heptonate = 3-dehydroquinate + phosphate. The protein operates within metabolic intermediate biosynthesis; chorismate biosynthesis; chorismate from D-erythrose 4-phosphate and phosphoenolpyruvate: step 2/7. Functionally, catalyzes the conversion of 3-deoxy-D-arabino-heptulosonate 7-phosphate (DAHP) to dehydroquinate (DHQ). In Tolumonas auensis (strain DSM 9187 / NBRC 110442 / TA 4), this protein is 3-dehydroquinate synthase.